Here is a 161-residue protein sequence, read N- to C-terminus: SsrA-binding protein (161 aa).

The tract at residues 138 to 161 (DKRTDSKEKDWNRDKARIMKSSLR) is disordered. The span at 139–154 (KRTDSKEKDWNRDKAR) shows a compositional bias: basic and acidic residues.

Belongs to the SmpB family.

Its subcellular location is the cytoplasm. Functionally, required for rescue of stalled ribosomes mediated by trans-translation. Binds to transfer-messenger RNA (tmRNA), required for stable association of tmRNA with ribosomes. tmRNA and SmpB together mimic tRNA shape, replacing the anticodon stem-loop with SmpB. tmRNA is encoded by the ssrA gene; the 2 termini fold to resemble tRNA(Ala) and it encodes a 'tag peptide', a short internal open reading frame. During trans-translation Ala-aminoacylated tmRNA acts like a tRNA, entering the A-site of stalled ribosomes, displacing the stalled mRNA. The ribosome then switches to translate the ORF on the tmRNA; the nascent peptide is terminated with the 'tag peptide' encoded by the tmRNA and targeted for degradation. The ribosome is freed to recommence translation, which seems to be the essential function of trans-translation. The chain is SsrA-binding protein from Aliivibrio fischeri (strain ATCC 700601 / ES114) (Vibrio fischeri).